The following is a 321-amino-acid chain: 1D-myo-inositol 2-acetamido-2-deoxy-alpha-D-glucopyranoside deacetylase (321 aa).

Residues His-15, Asp-18, and His-150 each coordinate Zn(2+). A disordered region spans residues 280–321; it reads PEGERESDLFAGLPPATDGTGAAGAPSATGAANPADAEGGAA. Residues 290–321 show a composition bias toward low complexity; that stretch reads AGLPPATDGTGAAGAPSATGAANPADAEGGAA.

This sequence belongs to the MshB deacetylase family. Requires Zn(2+) as cofactor.

The catalysed reaction is 1D-myo-inositol 2-acetamido-2-deoxy-alpha-D-glucopyranoside + H2O = 1D-myo-inositol 2-amino-2-deoxy-alpha-D-glucopyranoside + acetate. Catalyzes the deacetylation of 1D-myo-inositol 2-acetamido-2-deoxy-alpha-D-glucopyranoside (GlcNAc-Ins) in the mycothiol biosynthesis pathway. This Streptomyces griseus subsp. griseus (strain JCM 4626 / CBS 651.72 / NBRC 13350 / KCC S-0626 / ISP 5235) protein is 1D-myo-inositol 2-acetamido-2-deoxy-alpha-D-glucopyranoside deacetylase.